The following is a 137-amino-acid chain: ATP synthase epsilon chain, chloroplastic (137 aa).

This sequence belongs to the ATPase epsilon chain family. F-type ATPases have 2 components, CF(1) - the catalytic core - and CF(0) - the membrane proton channel. CF(1) has five subunits: alpha(3), beta(3), gamma(1), delta(1), epsilon(1). CF(0) has three main subunits: a, b and c.

Its subcellular location is the plastid. It is found in the chloroplast thylakoid membrane. Functionally, produces ATP from ADP in the presence of a proton gradient across the membrane. In Oryza nivara (Indian wild rice), this protein is ATP synthase epsilon chain, chloroplastic.